A 154-amino-acid polypeptide reads, in one-letter code: UPF0225 protein YPDSF_0962 (154 aa).

Belongs to the UPF0225 family.

This chain is UPF0225 protein YPDSF_0962, found in Yersinia pestis (strain Pestoides F).